We begin with the raw amino-acid sequence, 317 residues long: Ferrochelatase (317 aa).

Fe cation-binding residues include histidine 192 and glutamate 271.

The protein belongs to the ferrochelatase family.

The protein resides in the cytoplasm. The catalysed reaction is heme b + 2 H(+) = protoporphyrin IX + Fe(2+). The protein operates within porphyrin-containing compound metabolism; protoheme biosynthesis; protoheme from protoporphyrin-IX: step 1/1. Its function is as follows. Catalyzes the ferrous insertion into protoporphyrin IX. This is Ferrochelatase from Geobacter metallireducens (strain ATCC 53774 / DSM 7210 / GS-15).